A 490-amino-acid chain; its full sequence is uncharacterized protein (490 aa).

The first 19 residues, 1–19 (MSITSVSLYVYLICAGGHA), serve as a signal peptide directing secretion.

It belongs to the mimivirus L137 family.

This is an uncharacterized protein from Acanthamoeba polyphaga (Amoeba).